The sequence spans 545 residues: Chaperonin GroEL (545 aa).

Residues 29 to 32 (TLGP), K50, 86 to 90 (DGTTT), G415, and D495 contribute to the ATP site.

Belongs to the chaperonin (HSP60) family. As to quaternary structure, forms a cylinder of 14 subunits composed of two heptameric rings stacked back-to-back. Interacts with the co-chaperonin GroES.

The protein resides in the cytoplasm. It carries out the reaction ATP + H2O + a folded polypeptide = ADP + phosphate + an unfolded polypeptide.. In terms of biological role, together with its co-chaperonin GroES, plays an essential role in assisting protein folding. The GroEL-GroES system forms a nano-cage that allows encapsulation of the non-native substrate proteins and provides a physical environment optimized to promote and accelerate protein folding. This is Chaperonin GroEL from Bacteroides fragilis (strain ATCC 25285 / DSM 2151 / CCUG 4856 / JCM 11019 / LMG 10263 / NCTC 9343 / Onslow / VPI 2553 / EN-2).